We begin with the raw amino-acid sequence, 213 residues long: uncharacterized protein (213 aa).

The signal sequence occupies residues 1–21 (MKKILFLTVICFCLSSIKAYA).

This is an uncharacterized protein from Rickettsia prowazekii (strain Madrid E).